Here is a 487-residue protein sequence, read N- to C-terminus: 3-octaprenyl-4-hydroxybenzoate carboxy-lyase (487 aa).

Residue Asn172 participates in Mn(2+) binding. Residues 175–177, 189–191, and 194–195 contribute to the prenylated FMN site; these read IYR, RWL, and RG. Glu238 is a Mn(2+) binding site. The Proton donor role is filled by Asp287.

This sequence belongs to the UbiD family. As to quaternary structure, homohexamer. Prenylated FMN serves as cofactor. The cofactor is Mn(2+).

It localises to the cell membrane. The catalysed reaction is a 4-hydroxy-3-(all-trans-polyprenyl)benzoate + H(+) = a 2-(all-trans-polyprenyl)phenol + CO2. Its pathway is cofactor biosynthesis; ubiquinone biosynthesis. Its function is as follows. Catalyzes the decarboxylation of 3-octaprenyl-4-hydroxy benzoate to 2-octaprenylphenol, an intermediate step in ubiquinone biosynthesis. This Dechloromonas aromatica (strain RCB) protein is 3-octaprenyl-4-hydroxybenzoate carboxy-lyase.